The following is a 358-amino-acid chain: Guanidino acid hydrolase, mitochondrial (358 aa).

The N-terminal 36 residues, 1–36 (MLRLLRSSWARGLGSGVATWRPSAGLFRPGCPGIRQ), are a transit peptide targeting the mitochondrion. The interval 31–56 (CPGIRQASGASDTPHHQSPSSESPVQ) is disordered. Over residues 46–56 (HQSPSSESPVQ) the composition is skewed to low complexity. 2 residues coordinate Mn(2+): glutamine 168 and histidine 193. At lysine 199 the chain carries N6-acetyllysine. Lysine 223 carries the post-translational modification N6-acetyllysine; alternate. The residue at position 223 (lysine 223) is an N6-succinyllysine; alternate. Aspartate 284 is a binding site for Mn(2+).

Belongs to the arginase family. Agmatinase subfamily. Mn(2+) is required as a cofactor. In terms of tissue distribution, detected only in liver.

The protein resides in the mitochondrion. It carries out the reaction 3-guanidinopropanoate + H2O = urea + beta-alanine. The enzyme catalyses 4-guanidinobutanoate + H2O = urea + 4-aminobutanoate. The catalysed reaction is taurocyamine + H2O = urea + taurine. It catalyses the reaction L-arginine + H2O = urea + L-ornithine. Its pathway is nitrogen metabolism; urea cycle; L-ornithine and urea from L-arginine: step 1/1. Its function is as follows. Hydrolyzes linear guanidino acids to form urea and the corresponding amines. Displays specificity for substrates having a negatively charged head group and short chains including taurocyamine, guanidino propanoic and butanoic acids. May protect cells by detoxifying potentially harmful amounts of guanidino acids. Metabolizes L-arginine with low efficiency. This Mus musculus (Mouse) protein is Guanidino acid hydrolase, mitochondrial (Agmat).